Here is a 562-residue protein sequence, read N- to C-terminus: MSNNKETPEHLQAQNIIVIHPGSLYLRMGRASDVNPCRLLHAIGRRRKPGGRAYRDRVLSVPIAKPKESLSEFEECRLQVSHTLQSCVQSDGRRRYATPPQQISAFNRRSGAETVQASRVDWKDDLPGDKVFGEEVLWLNPAGEFNVHYPIRRGELNLHKDVGGSMSGVMCDLQDIWEYVLRHRLRIDLKQLKQYKAVLVISDIYNRAHLKELTSLLLNKIGFGCCFLVQDHVSATFGAGLGYACVVDVGDQKTSISCVEDGISHPNTRVRLPYGGADITQTFHWMLQKCSFPYKECDQSRPQDAFLLKQLKEDICHVNLDVCGAQEKTFAVHQPQQEKRRFTLQIGDEAIVAPLGLFHTELLSVTGVNKSTPMTQKPSRAQPHPEDCFDAEYLRETGRRGKENLEQTANESGMANAENADEDMVVEGLEQDREGKVNEKDFILPGGQMIGIDQAVLQSIERCPNDELKRKMYGCILVVGGGMKFTGISNWLQNRVALKIPLMYRSEHNIVTSSKDIDAEITAWKGAAIMSCLESAAELWLTEAEWTRYGLRILREKAVFMW.

248 to 251 (DVGD) is a binding site for ATP.

It belongs to the actin family. ARP8 subfamily. Component of the chromatin remodeling Ino80 complex. Exists as monomers and dimers, but the dimer is most probably the biologically relevant form required for stable interactions with histones that exploits the twofold symmetry of the nucleosome core.

It localises to the nucleus. Functionally, plays an important role in the functional organization of mitotic chromosomes. Exhibits low basal ATPase activity, and unable to polymerize. In terms of biological role, proposed core component of the chromatin remodeling INO80 complex which is involved in transcriptional regulation, DNA replication and probably DNA repair. Strongly prefer nucleosomes and H3-H4 tetramers over H2A-H2B dimers, suggesting it may act as a nucleosome recognition module within the complex. This Aedes aegypti (Yellowfever mosquito) protein is Actin-related protein 8.